The chain runs to 172 residues: 3-hydroxydecanoyl-[acyl-carrier-protein] dehydratase (172 aa).

His71 is a catalytic residue.

The protein belongs to the thioester dehydratase family. FabA subfamily. As to quaternary structure, homodimer.

The protein localises to the cytoplasm. The catalysed reaction is a (3R)-hydroxyacyl-[ACP] = a (2E)-enoyl-[ACP] + H2O. The enzyme catalyses (3R)-hydroxydecanoyl-[ACP] = (2E)-decenoyl-[ACP] + H2O. It carries out the reaction (2E)-decenoyl-[ACP] = (3Z)-decenoyl-[ACP]. It functions in the pathway lipid metabolism; fatty acid biosynthesis. Functionally, necessary for the introduction of cis unsaturation into fatty acids. Catalyzes the dehydration of (3R)-3-hydroxydecanoyl-ACP to E-(2)-decenoyl-ACP and then its isomerization to Z-(3)-decenoyl-ACP. Can catalyze the dehydratase reaction for beta-hydroxyacyl-ACPs with saturated chain lengths up to 16:0, being most active on intermediate chain length. The sequence is that of 3-hydroxydecanoyl-[acyl-carrier-protein] dehydratase from Salmonella choleraesuis (strain SC-B67).